Here is a 261-residue protein sequence, read N- to C-terminus: Probable septum site-determining protein MinC (261 aa).

Belongs to the MinC family. As to quaternary structure, interacts with MinD and FtsZ.

Functionally, cell division inhibitor that blocks the formation of polar Z ring septums. Rapidly oscillates between the poles of the cell to destabilize FtsZ filaments that have formed before they mature into polar Z rings. Prevents FtsZ polymerization. The protein is Probable septum site-determining protein MinC of Burkholderia cenocepacia (strain ATCC BAA-245 / DSM 16553 / LMG 16656 / NCTC 13227 / J2315 / CF5610) (Burkholderia cepacia (strain J2315)).